A 560-amino-acid polypeptide reads, in one-letter code: Zinc finger protein 619 (560 aa).

10 C2H2-type zinc fingers span residues 188 to 210 (YKCG…QRVH), 216 to 238 (YTCK…QKIH), 244 to 266 (YSCE…QKLH), 272 to 294 (YECT…QRIH), 300 to 322 (FKCK…ERIH), 328 to 350 (YECK…QRIH), 356 to 378 (YECK…QRFH), 384 to 406 (YKCN…QRIH), 412 to 434 (YECQ…QRVH), and 440 to 462 (YECK…QKWH).

Belongs to the krueppel C2H2-type zinc-finger protein family.

The protein resides in the nucleus. Its function is as follows. May be involved in transcriptional regulation. This Homo sapiens (Human) protein is Zinc finger protein 619 (ZNF619).